The sequence spans 688 residues: MADLEAVLADVSYLMAMEKSKATPAARASKKVVLPEPSIRSVMQRYLAERNEITFDKIFNQKIGFLLFKDFCLNEIGEAVPQVKFYEEIKEYEKLDNEEDRLHRSRQMYDAYIMRELLSSTHQFSKQAVEHVQSHLSKKQVTPTLFQPYIEEICESLRGDIFQKFMESEKFTRFCQWKNVELNIHLSMNDFSVHRIIGRGGFGEVYGCRKADTGKMYAMKCLDKKRVKMKQGETLALNERIMLSLVSTGDCPFIVCMTYAFHTPDKLCFILDLMNGGDMHYHLSQHGVFSEKEMRFYASEIILGLEHMHTCFVVYRDLKPANILLDEYGHVRISDLGLACDFSKKKPHASVGTHGYMAPEVLQKGTCYDSSADWFSLGCMLFKLLRGHSPFRQHKTKDKHEIDRMTLTVNVQLPDAFSPELRSLLEGLLQRDVSQRLGCYGGGARELKEHIFFKGIDWQYVYLRKYPPPLIPPRGEVNAADAFDIGSFDEEDTKGIKLLDCDQDLYKNFPLMISERWQQEVVETIYDAVNAETDKIEARKKAKNKQLCQEEDYAMGKDCIMHGYMLKLGNPFLTQWQRRYFYLFPNRLEWRGEGESRQNLLTMEQIMSVEETQIKDRKCILLRVKGGKQFVLQCESDPEFAQWLKELTCTFNEAQRLLRRAPKFLNKPRAAILEFSKPPLCHRNSSGL.

An N-terminal region spans residues 1–190 (MADLEAVLAD…ELNIHLSMND (190 aa)). The region spanning 54–175 (TFDKIFNQKI…MESEKFTRFC (122 aa)) is the RGS domain. Residues 191-453 (FSVHRIIGRG…ARELKEHIFF (263 aa)) enclose the Protein kinase domain. Residues 197 to 205 (IGRGGFGEV) and Lys220 contribute to the ATP site. The active-site Proton acceptor is Asp317. The AGC-kinase C-terminal domain occupies 454–521 (KGIDWQYVYL…MISERWQQEV (68 aa)). Residues 558-652 (DCIMHGYMLK…WLKELTCTFN (95 aa)) form the PH domain.

Belongs to the protein kinase superfamily. AGC Ser/Thr protein kinase family. GPRK subfamily. As to quaternary structure, interacts with GIT1. In terms of processing, ubiquitinated. In terms of tissue distribution, expressed in brain cortex, hippocampus, striatum, hypothalamus, cerebellum and brainstem (at protein level).

It is found in the postsynapse. The protein resides in the presynapse. It carries out the reaction [beta-adrenergic receptor] + ATP = [beta-adrenergic receptor]-phosphate + ADP + H(+). In terms of biological role, specifically phosphorylates the agonist-occupied form of the beta-adrenergic and closely related receptors. This Rattus norvegicus (Rat) protein is G protein-coupled receptor kinase 3.